Here is a 463-residue protein sequence, read N- to C-terminus: Thiamine-repressible acid phosphatase SPBC21H7.03c (463 aa).

The signal sequence occupies residues 1–18 (MQLCIISLWFLAAFIVNA). H69 (nucleophile) is an active-site residue. Residues N98, N104, N221, and N324 are each glycosylated (N-linked (GlcNAc...) asparagine). Residue D341 is the Proton donor of the active site. Residues N439 and N458 are each glycosylated (N-linked (GlcNAc...) asparagine).

Belongs to the histidine acid phosphatase family.

Its subcellular location is the secreted. It localises to the cell wall. The catalysed reaction is a phosphate monoester + H2O = an alcohol + phosphate. Functionally, may dephosphorylate thiamine phosphates. In Schizosaccharomyces pombe (strain 972 / ATCC 24843) (Fission yeast), this protein is Thiamine-repressible acid phosphatase SPBC21H7.03c.